Here is a 369-residue protein sequence, read N- to C-terminus: Galactose-1-phosphate uridylyltransferase (369 aa).

Cysteine 54 and cysteine 57 together coordinate Zn(2+). Residues alanine 63 and 79 to 80 contribute to the UDP-alpha-D-glucose site; that span reads ND. Residue histidine 127 participates in Zn(2+) binding. Asparagine 172 contacts UDP-alpha-D-glucose. Histidine 183 contacts Zn(2+). Histidine 185 acts as the Tele-UMP-histidine intermediate in catalysis. Position 187 (glutamine 187) interacts with UDP-alpha-D-glucose. Fe cation-binding residues include glutamate 201, histidine 300, histidine 317, and histidine 319. UDP-alpha-D-glucose-binding positions include 332–335 and 337–338; these read KFCV and FE.

Belongs to the galactose-1-phosphate uridylyltransferase type 1 family. Homodimer. Requires Zn(2+) as cofactor.

The catalysed reaction is alpha-D-galactose 1-phosphate + UDP-alpha-D-glucose = alpha-D-glucose 1-phosphate + UDP-alpha-D-galactose. It participates in carbohydrate metabolism; galactose metabolism. In Schizosaccharomyces pombe (strain 972 / ATCC 24843) (Fission yeast), this protein is Galactose-1-phosphate uridylyltransferase (gal7).